We begin with the raw amino-acid sequence, 319 residues long: Ubiquinone biosynthesis protein COQ4, mitochondrial (319 aa).

The transit peptide at 1–28 (MISRSIFSKSVSLQRSQNRSFLLTAASA) directs the protein to the mitochondrion. His205, Asp206, His209, and Glu221 together coordinate Zn(2+).

It belongs to the COQ4 family. In terms of assembly, component of a multi-subunit COQ enzyme complex, composed of at least COQ3, COQ4, COQ5, COQ6, COQ7 and COQ9. The cofactor is Zn(2+).

Its subcellular location is the mitochondrion inner membrane. It carries out the reaction a 4-hydroxy-3-methoxy-5-(all-trans-polyprenyl)benzoate + H(+) = a 2-methoxy-6-(all-trans-polyprenyl)phenol + CO2. It functions in the pathway cofactor biosynthesis; ubiquinone biosynthesis. Functionally, lyase that catalyzes the C1-decarboxylation of 4-hydroxy-3-methoxy-5-(all-trans-polyprenyl)benzoic acid into 2-methoxy-6-(all-trans-polyprenyl)phenol during ubiquinone biosynthesis. In Clavispora lusitaniae (strain ATCC 42720) (Yeast), this protein is Ubiquinone biosynthesis protein COQ4, mitochondrial.